A 449-amino-acid chain; its full sequence is Heterogeneous nuclear ribonucleoprotein H2 (449 aa).

Residue Met-1 is modified to N-acetylmethionine. Met-2 is subject to N-acetylmethionine; in Heterogeneous nuclear ribonucleoprotein H2, N-terminally processed. The region spanning Phe-11 to Ser-90 is the RRM 1 domain. Ser-23 carries the phosphoserine modification. A Glycyl lysine isopeptide (Lys-Gly) (interchain with G-Cter in SUMO2) cross-link involves residue Lys-35. 2 positions are modified to phosphoserine: Ser-54 and Ser-63. Lys-87 participates in a covalent cross-link: Glycyl lysine isopeptide (Lys-Gly) (interchain with G-Cter in SUMO2). Phosphoserine is present on Ser-90. Lys-98 is covalently cross-linked (Glycyl lysine isopeptide (Lys-Gly) (interchain with G-Cter in SUMO2)). Positions Gly-111–Arg-188 constitute an RRM 2 domain. Arg-233 carries the post-translational modification Dimethylated arginine; alternate. The residue at position 233 (Arg-233) is an Omega-N-methylarginine; alternate. A 1-1 repeat occupies Gly-234–Tyr-249. Positions Gly-234–Tyr-433 are 2 X 16 AA Gly-rich approximate repeats. Tyr-246 carries the phosphotyrosine modification. Positions His-289 to Thr-364 constitute an RRM 3 domain. Ser-310 is modified (phosphoserine). 3 consecutive repeat copies span residues His-354–Tyr-372, His-374–Tyr-392, and Gly-418–Tyr-433. Residues His-354–Tyr-392 are 2 X 19 AA perfect repeats.

As to quaternary structure, component of a ribonucleoprotein complex containing mRNAs and RNA-binding proteins including DDX5, HNRNPH2 and SRSF1 as well as splicing regulator ARVCF. Interacts with TXNL4/DIM1.

The protein resides in the nucleus. Its subcellular location is the nucleoplasm. Functionally, this protein is a component of the heterogeneous nuclear ribonucleoprotein (hnRNP) complexes which provide the substrate for the processing events that pre-mRNAs undergo before becoming functional, translatable mRNAs in the cytoplasm. Binds poly(RG). The protein is Heterogeneous nuclear ribonucleoprotein H2 (HNRNPH2) of Bos taurus (Bovine).